Reading from the N-terminus, the 231-residue chain is Beta-casein (231 aa).

The first 15 residues, 1 to 15 (MKVFILACLVALALA), serve as a signal peptide directing secretion. At S24 the chain carries Phosphoserine. T27 carries the phosphothreonine modification. Phosphoserine occurs at positions 29, 31, and 32.

Belongs to the beta-casein family. Mammary gland specific. Secreted in milk.

The protein localises to the secreted. Important role in determination of the surface properties of the casein micelles. The polypeptide is Beta-casein (Csn2) (Rattus norvegicus (Rat)).